We begin with the raw amino-acid sequence, 157 residues long: Phosphopantetheine adenylyltransferase (157 aa).

T8 serves as a coordination point for substrate. ATP contacts are provided by residues 8–9 and H16; that span reads TF. 3 residues coordinate substrate: K40, T72, and R86. Residues 87–89, E97, and 122–128 each bind ATP; these read GLR and YSFLSSS.

This sequence belongs to the bacterial CoaD family. Homohexamer. It depends on Mg(2+) as a cofactor.

The protein resides in the cytoplasm. It carries out the reaction (R)-4'-phosphopantetheine + ATP + H(+) = 3'-dephospho-CoA + diphosphate. It functions in the pathway cofactor biosynthesis; coenzyme A biosynthesis; CoA from (R)-pantothenate: step 4/5. Functionally, reversibly transfers an adenylyl group from ATP to 4'-phosphopantetheine, yielding dephospho-CoA (dPCoA) and pyrophosphate. The chain is Phosphopantetheine adenylyltransferase from Prochlorococcus marinus (strain MIT 9301).